A 327-amino-acid polypeptide reads, in one-letter code: uncharacterized protein (327 aa).

The S4 RNA-binding domain maps to 12-79; it reads KRIDEFLAKE…LKKELDLEIE (68 aa). Residue Asp-136 is part of the active site.

This sequence belongs to the pseudouridine synthase RluA family.

It carries out the reaction a uridine in RNA = a pseudouridine in RNA. This is an uncharacterized protein from Helicobacter pylori (strain J99 / ATCC 700824) (Campylobacter pylori J99).